A 147-amino-acid polypeptide reads, in one-letter code: MRTYSPKPGDVTRQWHVIDAQDVVLGRLATTAASILRGKHKPIYAPHVDTGDFVIIINADKVHLSGNKRTQKMAYRHSGYPGGLRSVRYDELLDKNPEKAVEKAIKGMLPKNSLGRQMLSKLKVYKGDQHPHGAQQPQPFEITQVAQ.

The tract at residues 128–147 is disordered; sequence DQHPHGAQQPQPFEITQVAQ.

It belongs to the universal ribosomal protein uL13 family. Part of the 50S ribosomal subunit.

This protein is one of the early assembly proteins of the 50S ribosomal subunit, although it is not seen to bind rRNA by itself. It is important during the early stages of 50S assembly. The polypeptide is Large ribosomal subunit protein uL13 (Streptomyces coelicolor (strain ATCC BAA-471 / A3(2) / M145)).